A 724-amino-acid chain; its full sequence is Golgin subfamily A member 6-like protein 6 (724 aa).

5 disordered regions span residues 1-108, 314-342, 374-454, 517-548, and 561-724; these read MLMW…HQEA, QEEKIREQEEKMRRQEEMMWEKEEKMRRQ, MHEQ…EMWR, QEEMWREEEKMHEQEKIWEEEKRQEQEDKMWR, and WRQE…MQEH. A compositionally biased stretch (basic residues) spans 15–29; that stretch reads LPTHPHLPTHPHLPT. Residues 39–60 are compositionally biased toward basic and acidic residues; that stretch reads MSKETRQSKLAEAKEQLTDHHP. Polar residues-rich tracts occupy residues 61 to 71 and 79 to 91; these read QTNPSVGTAAS and NNGTNPETTTSGG. Basic and acidic residues predominate over residues 94 to 108; sequence SPEDEQKASHQHQEA. Positions 164 to 686 form a coiled coil; it reads ELEQALSAVA…EKMWEQEEKM (523 aa).

This sequence belongs to the GOLGA6 family.

This chain is Golgin subfamily A member 6-like protein 6 (GOLGA6L6), found in Homo sapiens (Human).